Reading from the N-terminus, the 296-residue chain is Ribosomal RNA small subunit methyltransferase J (296 aa).

Aspartate 205 contacts S-adenosyl-L-methionine.

Belongs to the methyltransferase superfamily. RsmJ family.

It is found in the cytoplasm. It catalyses the reaction guanosine(1516) in 16S rRNA + S-adenosyl-L-methionine = N(2)-methylguanosine(1516) in 16S rRNA + S-adenosyl-L-homocysteine + H(+). Specifically methylates the guanosine in position 1516 of 16S rRNA. The protein is Ribosomal RNA small subunit methyltransferase J of Psychrobacter arcticus (strain DSM 17307 / VKM B-2377 / 273-4).